The chain runs to 144 residues: Nucleoside diphosphate kinase (144 aa).

Residues Lys-11, Phe-59, Arg-87, Thr-93, Arg-104, and Asn-114 each coordinate ATP. His-117 acts as the Pros-phosphohistidine intermediate in catalysis.

The protein belongs to the NDK family. Homotetramer. Mg(2+) serves as cofactor.

The protein resides in the cytoplasm. It carries out the reaction a 2'-deoxyribonucleoside 5'-diphosphate + ATP = a 2'-deoxyribonucleoside 5'-triphosphate + ADP. It catalyses the reaction a ribonucleoside 5'-diphosphate + ATP = a ribonucleoside 5'-triphosphate + ADP. Functionally, major role in the synthesis of nucleoside triphosphates other than ATP. The ATP gamma phosphate is transferred to the NDP beta phosphate via a ping-pong mechanism, using a phosphorylated active-site intermediate. The sequence is that of Nucleoside diphosphate kinase from Aliivibrio salmonicida (strain LFI1238) (Vibrio salmonicida (strain LFI1238)).